We begin with the raw amino-acid sequence, 381 residues long: 40-kDa huntingtin-associated protein (381 aa).

A2 bears the N-acetylalanine mark. Residues 34–36 (KKR) carry the Nuclear localization signal motif. The segment at 213–260 (EHGGHPVQQPELPQQLPSVPQPSLPGPQPRPVLGSTLPLPLPPDHAPG) is disordered. Residues 218-230 (PVQQPELPQQLPS) show a composition bias toward low complexity. The segment covering 231–242 (VPQPSLPGPQPR) has biased composition (pro residues).

Interacts with HTT (via C-terminus). Interacts with RAB5A. Found in a complex with F8A1/F8A2/F8A3, HTT and RAB5A; mediates the recruitment of HTT by RAB5A onto early endosomes.

Its subcellular location is the cytoplasm. It is found in the nucleus. The protein localises to the early endosome. It localises to the nuclear body. RAB5A effector molecule that is involved in vesicular trafficking of early endosomes. Mediates the recruitment of HTT by RAB5A onto early endosomes. The HTT-F8A1/F8A2/F8A3-RAB5A complex stimulates early endosomal interaction with actin filaments and inhibits interaction with microtubules, leading to the reduction of endosome motility. This Rattus norvegicus (Rat) protein is 40-kDa huntingtin-associated protein (F8a1).